The primary structure comprises 235 residues: Phosphoribosylaminoimidazole-succinocarboxamide synthase (235 aa).

The protein belongs to the SAICAR synthetase family.

The catalysed reaction is 5-amino-1-(5-phospho-D-ribosyl)imidazole-4-carboxylate + L-aspartate + ATP = (2S)-2-[5-amino-1-(5-phospho-beta-D-ribosyl)imidazole-4-carboxamido]succinate + ADP + phosphate + 2 H(+). The protein operates within purine metabolism; IMP biosynthesis via de novo pathway; 5-amino-1-(5-phospho-D-ribosyl)imidazole-4-carboxamide from 5-amino-1-(5-phospho-D-ribosyl)imidazole-4-carboxylate: step 1/2. The chain is Phosphoribosylaminoimidazole-succinocarboxamide synthase from Sulfolobus acidocaldarius (strain ATCC 33909 / DSM 639 / JCM 8929 / NBRC 15157 / NCIMB 11770).